A 363-amino-acid chain; its full sequence is Putative serine/threonine-protein kinase gskl-1 (363 aa).

The 285-residue stretch at 20-304 (FGAHKLCGSG…AIDVLKMPLF (285 aa)) folds into the Protein kinase domain. Residues 26 to 34 (CGSGRFSNV) and Lys50 each bind ATP. Asp146 acts as the Proton acceptor in catalysis. A disordered region spans residues 311–363 (PPKKRSNGVEMPNLASYTEMHHKREPETEVVADIQTTEKAEKESDSTNEELED). Over residues 346-355 (TTEKAEKESD) the composition is skewed to basic and acidic residues.

This sequence belongs to the protein kinase superfamily. Ser/Thr protein kinase family. As to expression, expressed during multiple stages of spermatogenesis, in males and hermaphrodites (at protein level).

The protein localises to the cytoplasm. It localises to the cell projection. It is found in the pseudopodium. It carries out the reaction L-seryl-[protein] + ATP = O-phospho-L-seryl-[protein] + ADP + H(+). The enzyme catalyses L-threonyl-[protein] + ATP = O-phospho-L-threonyl-[protein] + ADP + H(+). May be an autophosphorylating tyrosine kinase, a bifunctional (serine/tyrosine-specific) protein kinase, or a serine kinase that is a substrate for an associated tyrosine kinase. Acting in concert with putative serine/threonine-protein kinase gskl-2, required for sister chromatid segregation and spermatid budding during male meiosis. Plays a role in regulating female meiosis II, together with gskl-2. Involved in sperm pseudopod formation and function, together with gskl-2. In Caenorhabditis elegans, this protein is Putative serine/threonine-protein kinase gskl-1.